Reading from the N-terminus, the 2555-residue chain is Ubiquitin carboxyl-terminal hydrolase 9Y (2555 aa).

The tract at residues 1-66 is disordered; it reads MTAITHGSPV…APPQHEDEEP (66 aa). Over residues 13 to 45 the composition is skewed to polar residues; it reads NDSQGQVLDGQSQHLFQQNQTSSPDSSNENSVA. The residue at position 589 (Ser589) is a Phosphoserine. Thr591 bears the Phosphothreonine mark. A disordered region spans residues 972-997; that stretch reads NMPSSPDSSSDSSTASPGNHRNHYND. Residues 974 to 984 are compositionally biased toward low complexity; sequence PSSPDSSSDSS. A USP domain is found at 1559–1958; that stretch reads VGLKNAGATC…NAYILFYEQM (400 aa). The active-site Nucleophile is the Cys1568. Residues Cys1729, His1731, Cys1773, and Cys1776 each contribute to the Zn(2+) site. His1881 functions as the Proton acceptor in the catalytic mechanism. Ser2444 carries the phosphoserine modification. The segment covering 2476-2485 has biased composition (acidic residues); sequence PEEEPDDQDA. A disordered region spans residues 2476-2555; sequence PEEEPDDQDA…EVSSPQMKDQ (80 aa). 2 stretches are compositionally biased toward polar residues: residues 2504 to 2514 and 2528 to 2555; these read PASQYQQNNHV and NNPQKTGQRTQENYEGNEEVSSPQMKDQ. Position 2541 is a phosphotyrosine (Tyr2541). A Phosphoserine modification is found at Ser2548.

Belongs to the peptidase C19 family. As to expression, widely expressed in embryonic and adult tissues.

It carries out the reaction Thiol-dependent hydrolysis of ester, thioester, amide, peptide and isopeptide bonds formed by the C-terminal Gly of ubiquitin (a 76-residue protein attached to proteins as an intracellular targeting signal).. It functions in the pathway protein modification; protein ubiquitination. Functionally, deubiquitinase that mediates deubiquitination of target proteins. May stabilize target proteins that are important for male germ cell development. This Homo sapiens (Human) protein is Ubiquitin carboxyl-terminal hydrolase 9Y.